The sequence spans 101 residues: NAD(P)H-quinone oxidoreductase subunit 4L, chloroplastic (101 aa).

A run of 3 helical transmembrane segments spans residues 2–22, 32–52, and 61–81; these read MFEH…YGLI, MCLE…SDLF, and IFSI…LAIV.

It belongs to the complex I subunit 4L family. As to quaternary structure, NDH is composed of at least 16 different subunits, 5 of which are encoded in the nucleus.

It is found in the plastid. The protein localises to the chloroplast thylakoid membrane. It carries out the reaction a plastoquinone + NADH + (n+1) H(+)(in) = a plastoquinol + NAD(+) + n H(+)(out). The catalysed reaction is a plastoquinone + NADPH + (n+1) H(+)(in) = a plastoquinol + NADP(+) + n H(+)(out). NDH shuttles electrons from NAD(P)H:plastoquinone, via FMN and iron-sulfur (Fe-S) centers, to quinones in the photosynthetic chain and possibly in a chloroplast respiratory chain. The immediate electron acceptor for the enzyme in this species is believed to be plastoquinone. Couples the redox reaction to proton translocation, and thus conserves the redox energy in a proton gradient. The chain is NAD(P)H-quinone oxidoreductase subunit 4L, chloroplastic from Lemna minor (Common duckweed).